The sequence spans 152 residues: Large ribosomal subunit protein uL15 (152 aa).

Residues 31-58 (GASCGFGMRGQKSRSGRPTRPGFEGGQM) form a disordered region.

This sequence belongs to the universal ribosomal protein uL15 family. As to quaternary structure, part of the 50S ribosomal subunit.

Binds to the 23S rRNA. This chain is Large ribosomal subunit protein uL15, found in Parasynechococcus marenigrum (strain WH8102).